The following is a 453-amino-acid chain: UDP-N-acetylmuramoylalanine--D-glutamate ligase (453 aa).

115–121 lines the ATP pocket; the sequence is GTNGKTT.

The protein belongs to the MurCDEF family.

Its subcellular location is the cytoplasm. The catalysed reaction is UDP-N-acetyl-alpha-D-muramoyl-L-alanine + D-glutamate + ATP = UDP-N-acetyl-alpha-D-muramoyl-L-alanyl-D-glutamate + ADP + phosphate + H(+). The protein operates within cell wall biogenesis; peptidoglycan biosynthesis. In terms of biological role, cell wall formation. Catalyzes the addition of glutamate to the nucleotide precursor UDP-N-acetylmuramoyl-L-alanine (UMA). The polypeptide is UDP-N-acetylmuramoylalanine--D-glutamate ligase (Geotalea uraniireducens (strain Rf4) (Geobacter uraniireducens)).